Reading from the N-terminus, the 925-residue chain is Protein translocase subunit SecA (925 aa).

Residues glutamine 87, 105–109, and aspartate 531 contribute to the ATP site; that span reads GEGKT. Positions 867–909 are disordered; it reads AAGADMRFQHSQPESVLHKPEAGEGEEAQPFRRETPKVGRNDP. Residues 895–906 are compositionally biased toward basic and acidic residues; it reads QPFRRETPKVGR. Cysteine 910, cysteine 912, cysteine 921, and histidine 922 together coordinate Zn(2+).

This sequence belongs to the SecA family. As to quaternary structure, monomer and homodimer. Part of the essential Sec protein translocation apparatus which comprises SecA, SecYEG and auxiliary proteins SecDF-YajC and YidC. Requires Zn(2+) as cofactor.

It localises to the cell inner membrane. The protein resides in the cytoplasm. The catalysed reaction is ATP + H2O + cellular proteinSide 1 = ADP + phosphate + cellular proteinSide 2.. In terms of biological role, part of the Sec protein translocase complex. Interacts with the SecYEG preprotein conducting channel. Has a central role in coupling the hydrolysis of ATP to the transfer of proteins into and across the cell membrane, serving both as a receptor for the preprotein-SecB complex and as an ATP-driven molecular motor driving the stepwise translocation of polypeptide chains across the membrane. The chain is Protein translocase subunit SecA from Thioalkalivibrio sulfidiphilus (strain HL-EbGR7).